The sequence spans 1855 residues: Unconventional myosin-Va (1855 aa).

At A2 the chain carries N-acetylalanine. Residues 8-60 form the Myosin N-terminal SH3-like domain; the sequence is TKFARVWIPDPEEVWKSAELLKDYKPGDKVLLLHLEEGKDLEYHLDPKTKELP. In terms of domain architecture, Myosin motor spans 69 to 763; the sequence is VGENDLTALS…QVAYLEKLRA (695 aa). 163-170 serves as a coordination point for ATP; that stretch reads GESGAGKT. The interval 598–631 is disordered; it reads AISPTSATSSGRTPLTRTPAKPTKGRPGQMAKEH. The residue at position 600 (S600) is a Phosphoserine. The span at 600–613 shows a compositional bias: polar residues; sequence SPTSATSSGRTPLT. Residues 643 to 665 are actin-binding; sequence LHLLMETLNATTPHYVRCIKPND. IQ domains lie at 766–788, 789–818, 814–836, 837–861, 862–883, and 885–914; these read LRAA…KYLR, MRKA…TKAA, RTKA…RYKI, RRAA…RKIL, REHK…THYK, and SMHA…EARS. 2 coiled-coil regions span residues 914 to 1237 and 1338 to 1445; these read SVER…APEV and VYEG…ELEV. Position 1032 is a phosphothreonine (T1032). A phosphoserine mark is found at S1452 and S1652. The Dilute domain occupies 1534–1810; that stretch reads TSTINSIKKV…IRTIQMRLRD (277 aa). Position 1760 is a phosphothreonine (T1760).

Belongs to the TRAFAC class myosin-kinesin ATPase superfamily. Myosin family. As to quaternary structure, may be a homodimer, which associates with multiple calmodulin or myosin light chains. Interacts with RIPL2, the interaction is required for its role in dendrite formation. Interacts with MLPH. Interacts with SYTL4. Interacts with MYRIP. Interacts with RAB10; mediates the transport to the plasma membrane of SLC2A4/GLUT4 storage vesicles. Interacts with FMR1; this interaction occurs in association with polyribosome. As to expression, detected in melanocytes.

It carries out the reaction ATP + H2O = ADP + phosphate + H(+). Its function is as follows. Processive actin-based motor that can move in large steps approximating the 36-nm pseudo-repeat of the actin filament. Can hydrolyze ATP in the presence of actin, which is essential for its function as a motor protein. Involved in melanosome transport. Also mediates the transport of vesicles to the plasma membrane. May also be required for some polarization process involved in dendrite formation. This Homo sapiens (Human) protein is Unconventional myosin-Va (MYO5A).